A 287-amino-acid chain; its full sequence is Protease HtpX (287 aa).

Transmembrane regions (helical) follow at residues 4–24 (IFLL…VMSI) and 33–53 (GGLL…SLAI). Histidine 139 serves as a coordination point for Zn(2+). Glutamate 140 is a catalytic residue. Histidine 143 provides a ligand contact to Zn(2+). The next 2 helical transmembrane spans lie at 154–174 (LIQG…AGII) and 195–215 (AVVF…VAYF). Glutamate 220 contacts Zn(2+).

This sequence belongs to the peptidase M48B family. The cofactor is Zn(2+).

It is found in the cell inner membrane. In Shewanella baltica (strain OS223), this protein is Protease HtpX.